The sequence spans 292 residues: Alpha-soluble NSF attachment protein (292 aa).

Belongs to the SNAP family.

The protein resides in the cytoplasmic vesicle. The protein localises to the membrane. Functionally, required for vesicular transport between the endoplasmic reticulum and the Golgi apparatus. Also between the endosome and phagosome. The polypeptide is Alpha-soluble NSF attachment protein (Drosophila melanogaster (Fruit fly)).